We begin with the raw amino-acid sequence, 622 residues long: Threonine--tRNA ligase (622 aa).

The editing domain stretch occupies residues 1–141; it reads MKTLLIHSDY…SRKITTERKE (141 aa). Residues 199-498 are catalytic; that stretch reads PHVKYIKEKE…TLENKPPALP (300 aa). The Zn(2+) site is built by Cys291, His343, and His467.

Belongs to the class-II aminoacyl-tRNA synthetase family. Homodimer. The cofactor is Zn(2+).

It is found in the cytoplasm. The catalysed reaction is tRNA(Thr) + L-threonine + ATP = L-threonyl-tRNA(Thr) + AMP + diphosphate + H(+). In terms of biological role, catalyzes the attachment of threonine to tRNA(Thr) in a two-step reaction: L-threonine is first activated by ATP to form Thr-AMP and then transferred to the acceptor end of tRNA(Thr). Also edits incorrectly charged L-seryl-tRNA(Thr). The polypeptide is Threonine--tRNA ligase (Methanococcus maripaludis (strain C7 / ATCC BAA-1331)).